The following is a 225-amino-acid chain: Suppressor of cytokine signaling 3 (225 aa).

The interval 22-33 (LKTFSSKSEYQL) is kinase inhibitory region (KIR). Residues 34 to 45 (VVNAVRKLQESG) form an extended SH2 subdomain (ESS) region. The 97-residue stretch at 46–142 (FYWSAVTGGE…APSFPSPPTE (97 aa)) folds into the SH2 domain. Residues 131 to 142 (PGAPSFPSPPTE) show a composition bias toward pro residues. The tract at residues 131-162 (PGAPSFPSPPTEPSSEVPEQPSAQPLPGSPPR) is disordered. Residues 143–155 (PSSEVPEQPSAQP) are compositionally biased toward low complexity. An SOCS box domain is found at 177 to 224 (VLSRPLSSNVATLQHLCRKTVNGHLDSYEKVTQLPGPIREFLDQYDAP).

As to quaternary structure, interacts with multiple activated proteins of the tyrosine kinase signaling pathway including IGF1 receptor, insulin receptor and JAK2. Binding to JAK2 is mediated through the KIR and SH2 domains to a phosphorylated tyrosine residue within the JAK2 JH1 domain. Binds specific activated tyrosine residues of the leptin, EPO, IL12, GSCF and gp130 receptors. Interaction with CSNK1E stabilizes SOCS3 protein. Component of the probable ECS(SOCS3) E3 ubiquitin-protein ligase complex which contains CUL5, RNF7/RBX2, Elongin BC complex and SOCS3. Interacts with CUL5, RNF7, ELOB and ELOC. Interacts with CUL2. Interacts with FGFR3. Interacts with INSR. Interacts with BCL10; this interaction may interfere with BCL10-binding with PELI2. Interacts with NOD2 (via CARD domain); the interaction promotes NOD2 degradation. Phosphorylated on tyrosine residues after stimulation by the cytokines, IL-2, EPO or IGF1. As to expression, widely expressed with high expression in heart, placenta, skeletal muscle, peripheral blood leukocytes, fetal and adult lung, and fetal liver and kidney. Lower levels in thymus.

Its pathway is protein modification; protein ubiquitination. In terms of biological role, SOCS family proteins form part of a classical negative feedback system that regulates cytokine signal transduction. SOCS3 is involved in negative regulation of cytokines that signal through the JAK/STAT pathway. Inhibits cytokine signal transduction by binding to tyrosine kinase receptors including IL6ST/gp130, LIF, erythropoietin, insulin, IL12, GCSF and leptin receptors. Binding to JAK2 inhibits its kinase activity and regulates IL6 signaling. Suppresses fetal liver erythropoiesis. Regulates onset and maintenance of allergic responses mediated by T-helper type 2 cells. Probable substrate recognition component of a SCF-like ECS (Elongin BC-CUL2/5-SOCS-box protein) E3 ubiquitin-protein ligase complex which mediates the ubiquitination and subsequent proteasomal degradation of target proteins. This Homo sapiens (Human) protein is Suppressor of cytokine signaling 3.